Consider the following 212-residue polypeptide: Regulatory protein RecX (212 aa).

Belongs to the RecX family.

It is found in the cytoplasm. In terms of biological role, modulates RecA activity. This chain is Regulatory protein RecX, found in Clostridium botulinum (strain Eklund 17B / Type B).